Reading from the N-terminus, the 607-residue chain is Elongation factor 4 (607 aa).

In terms of domain architecture, tr-type G spans 11–193 (EKIRNFSIIA…QIVEKVPAPT (183 aa)). Residues 23 to 28 (DHGKST) and 140 to 143 (NKID) contribute to the GTP site.

The protein belongs to the TRAFAC class translation factor GTPase superfamily. Classic translation factor GTPase family. LepA subfamily.

The protein resides in the cell membrane. It catalyses the reaction GTP + H2O = GDP + phosphate + H(+). Its function is as follows. Required for accurate and efficient protein synthesis under certain stress conditions. May act as a fidelity factor of the translation reaction, by catalyzing a one-codon backward translocation of tRNAs on improperly translocated ribosomes. Back-translocation proceeds from a post-translocation (POST) complex to a pre-translocation (PRE) complex, thus giving elongation factor G a second chance to translocate the tRNAs correctly. Binds to ribosomes in a GTP-dependent manner. The chain is Elongation factor 4 from Streptococcus pneumoniae (strain Hungary19A-6).